The chain runs to 291 residues: Probable L-ascorbate peroxidase 4, peroxisomal (291 aa).

His40 serves as the catalytic Proton acceptor. His160 serves as a coordination point for heme b. The K(+) site is built by Thr161, Thr177, and Asp184. Residues 263–283 (VLAQSAVGVAVAAAVVIVSYL) traverse the membrane as a helical segment.

This sequence belongs to the peroxidase family. Ascorbate peroxidase subfamily. Requires heme b as cofactor. Expressed in leaves, stems and flowers.

It is found in the peroxisome membrane. It carries out the reaction L-ascorbate + H2O2 = L-dehydroascorbate + 2 H2O. Plays a key role in hydrogen peroxide removal. In Oryza sativa subsp. japonica (Rice), this protein is Probable L-ascorbate peroxidase 4, peroxisomal.